Consider the following 202-residue polypeptide: uncharacterized protein (202 aa).

The HTH tetR-type domain occupies 13–73; that stretch reads ELAADRILDA…AYVHRETRRL (61 aa). The H-T-H motif DNA-binding region spans 36-55; sequence GMNEIAKAAGCSRATLYRYF.

This is an uncharacterized protein from Mycobacterium tuberculosis (strain CDC 1551 / Oshkosh).